A 310-amino-acid chain; its full sequence is Thioredoxin reductase (310 aa).

35 to 42 (ERGMPGGQ) serves as a coordination point for FAD. A disulfide bridge links cysteine 134 with cysteine 137. 277-286 (DVRDKGLRQI) is a binding site for FAD.

The protein belongs to the class-II pyridine nucleotide-disulfide oxidoreductase family. Homodimer. The cofactor is FAD.

It localises to the cytoplasm. The enzyme catalyses [thioredoxin]-dithiol + NADP(+) = [thioredoxin]-disulfide + NADPH + H(+). The polypeptide is Thioredoxin reductase (trxB) (Staphylococcus epidermidis (strain ATCC 35984 / DSM 28319 / BCRC 17069 / CCUG 31568 / BM 3577 / RP62A)).